The primary structure comprises 125 residues: Small ribosomal subunit protein uS12 (125 aa).

Aspartate 89 carries the 3-methylthioaspartic acid modification.

It belongs to the universal ribosomal protein uS12 family. In terms of assembly, part of the 30S ribosomal subunit. Contacts proteins S8 and S17. May interact with IF1 in the 30S initiation complex.

Its function is as follows. With S4 and S5 plays an important role in translational accuracy. Functionally, interacts with and stabilizes bases of the 16S rRNA that are involved in tRNA selection in the A site and with the mRNA backbone. Located at the interface of the 30S and 50S subunits, it traverses the body of the 30S subunit contacting proteins on the other side and probably holding the rRNA structure together. The combined cluster of proteins S8, S12 and S17 appears to hold together the shoulder and platform of the 30S subunit. The protein is Small ribosomal subunit protein uS12 of Clostridium novyi (strain NT).